Consider the following 149-residue polypeptide: MHCPFCNADDTKVIDSRLVADGHQVRRRRECLVCHERFTTFEMAELVMPRVIKSNGVREPFNEDKLRNGIQRALEKRPVSTELIEQSINRIKSNLRATGEREIMSKIIGNLVMEELKLLDKVAYIRFASVYRSFEDIREFGEEIARLEK.

Residues Cys3 to Cys34 fold into a zinc finger. Residues Pro49–Glu139 enclose the ATP-cone domain.

This sequence belongs to the NrdR family. Zn(2+) serves as cofactor.

Negatively regulates transcription of bacterial ribonucleotide reductase nrd genes and operons by binding to NrdR-boxes. This is Transcriptional repressor NrdR from Tolumonas auensis (strain DSM 9187 / NBRC 110442 / TA 4).